We begin with the raw amino-acid sequence, 356 residues long: tRNA-specific 2-thiouridylase MnmA 1 (356 aa).

Residues 8–15 (GMSGGVDS) and Met34 each bind ATP. Catalysis depends on Cys103, which acts as the Nucleophile. An intrachain disulfide couples Cys103 to Cys199. Position 127 (Gly127) interacts with ATP. The interaction with tRNA stretch occupies residues 149 to 151 (KDQ). The Cysteine persulfide intermediate role is filled by Cys199. An interaction with tRNA region spans residues 305-306 (RY).

The protein belongs to the MnmA/TRMU family.

It localises to the cytoplasm. It carries out the reaction S-sulfanyl-L-cysteinyl-[protein] + uridine(34) in tRNA + AH2 + ATP = 2-thiouridine(34) in tRNA + L-cysteinyl-[protein] + A + AMP + diphosphate + H(+). Its function is as follows. Catalyzes the 2-thiolation of uridine at the wobble position (U34) of tRNA, leading to the formation of s(2)U34. The sequence is that of tRNA-specific 2-thiouridylase MnmA 1 from Clostridium botulinum (strain Loch Maree / Type A3).